A 309-amino-acid chain; its full sequence is Protein FdhE homolog (309 aa).

This sequence belongs to the FdhE family.

It is found in the cytoplasm. Functionally, necessary for formate dehydrogenase activity. The sequence is that of Protein FdhE homolog from Serratia proteamaculans (strain 568).